Here is a 126-residue protein sequence, read N- to C-terminus: Small ribosomal subunit protein uS12 (126 aa).

A disordered region spans residues 1–28; that stretch reads MPTIQQLIRSERSKVQKKTKSPALKQCP. Residue D89 is modified to 3-methylthioaspartic acid. The segment at 104 to 126 is disordered; it reads ATGVKDRKQGRSKYGTKREKAKK. Residues 113–126 are compositionally biased toward basic residues; the sequence is GRSKYGTKREKAKK.

Belongs to the universal ribosomal protein uS12 family. As to quaternary structure, part of the 30S ribosomal subunit. Contacts proteins S8 and S17. May interact with IF1 in the 30S initiation complex.

Functionally, with S4 and S5 plays an important role in translational accuracy. In terms of biological role, interacts with and stabilizes bases of the 16S rRNA that are involved in tRNA selection in the A site and with the mRNA backbone. Located at the interface of the 30S and 50S subunits, it traverses the body of the 30S subunit contacting proteins on the other side and probably holding the rRNA structure together. The combined cluster of proteins S8, S12 and S17 appears to hold together the shoulder and platform of the 30S subunit. This is Small ribosomal subunit protein uS12 from Synechocystis sp. (strain ATCC 27184 / PCC 6803 / Kazusa).